Here is a 194-residue protein sequence, read N- to C-terminus: ATP-dependent Clp protease proteolytic subunit (194 aa).

Ser98 functions as the Nucleophile in the catalytic mechanism. His123 is a catalytic residue.

The protein belongs to the peptidase S14 family. Fourteen ClpP subunits assemble into 2 heptameric rings which stack back to back to give a disk-like structure with a central cavity, resembling the structure of eukaryotic proteasomes.

It is found in the cytoplasm. It catalyses the reaction Hydrolysis of proteins to small peptides in the presence of ATP and magnesium. alpha-casein is the usual test substrate. In the absence of ATP, only oligopeptides shorter than five residues are hydrolyzed (such as succinyl-Leu-Tyr-|-NHMec, and Leu-Tyr-Leu-|-Tyr-Trp, in which cleavage of the -Tyr-|-Leu- and -Tyr-|-Trp bonds also occurs).. Functionally, cleaves peptides in various proteins in a process that requires ATP hydrolysis. Has a chymotrypsin-like activity. Plays a major role in the degradation of misfolded proteins. The protein is ATP-dependent Clp protease proteolytic subunit of Sodalis glossinidius (strain morsitans).